Consider the following 400-residue polypeptide: MRKLVYLVLVLGLTFLNVRCKSETKQNKKEEQNIGKQYSSLENRFQKLVNYPVGANNFPRSMSLAPEVVHKVPSKDWTSGFFPGNLWLIHELTGDSIYKVKAQEWTVLMEDQKENDRTHDMGFKVYCSFGEGLKQDPDNQYYKDVIIESAKTLITRYNDTVKSIRSWDFNKDVWDFPVIIDNMMNLELLFEATKISGDNIYHNIAVQHANTTLKHQFRPDYSVFHVINYDTISGVVKTKDTHQGFDRNSTWARGQAWAIYGYTMSYRYTNNPKYLAQAEATTQFYMEHENLPKDGVPYWDFNDPEISDAPRDASAAAIVTSALFELYTYTNNKTYLDFATQVLNTLNSEAYLLKDTVNGPFILNHSTGNWPKNDEIDEPIVYGDYYFLEALKRKQNLILK.

The first 20 residues, 1 to 20 (MRKLVYLVLVLGLTFLNVRC), serve as a signal peptide directing secretion. Asp120 functions as the Nucleophile in the catalytic mechanism. Asp181 acts as the Proton donor in catalysis.

It belongs to the glycosyl hydrolase 88 family.

Its subcellular location is the cell surface. Functionally, unsaturated glucuronyl hydrolase involved in ulvan degradation. Ulvan is the main polysaccharide component of the Ulvales (green seaweed) cell wall. It is composed of disaccharide building blocks comprising 3-sulfated rhamnose (Rha3S) linked to D-glucuronic acid (GlcA), L-iduronic acid (IduA), or D-xylose (Xyl). Unsaturated glucuronyl hydrolase catalyzes the cleavage of the unsaturated 4-deoxy-L-threo-hex-4-enopyranosiduronic acid (deltaUA) at the non-reducing end of ulvan oligomers, thus forming 5-dehydro-4-deoxy-D-glucuronate. This chain is Unsaturated glucuronyl hydrolase, found in Formosa agariphila (strain DSM 15362 / KCTC 12365 / LMG 23005 / KMM 3901 / M-2Alg 35-1).